Reading from the N-terminus, the 628-residue chain is Chaperone protein HtpG (628 aa).

Positions 1-339 are a; substrate-binding; it reads MSNNQQTLGF…SNDLPLNVSR (339 aa). The b stretch occupies residues 340-556; the sequence is EILQDNKTTA…NDQMTTQMAK (217 aa). Residues 557–628 are c; the sequence is LFAMSGQPVP…IKRVNTLLAG (72 aa).

The protein belongs to the heat shock protein 90 family. In terms of assembly, homodimer.

It is found in the cytoplasm. Functionally, molecular chaperone. Has ATPase activity. This chain is Chaperone protein HtpG, found in Actinobacillus succinogenes (strain ATCC 55618 / DSM 22257 / CCUG 43843 / 130Z).